A 279-amino-acid polypeptide reads, in one-letter code: Peptide deformylase 1B, chloroplastic (279 aa).

2 residues coordinate Fe cation: Cys177 and His219. The active site involves Glu220. His223 lines the Fe cation pocket.

The protein belongs to the polypeptide deformylase family. Fe(2+) is required as a cofactor.

It localises to the plastid. The protein localises to the chloroplast. It catalyses the reaction N-terminal N-formyl-L-methionyl-[peptide] + H2O = N-terminal L-methionyl-[peptide] + formate. Its function is as follows. Removes the formyl group from the N-terminal Met of newly synthesized proteins. The polypeptide is Peptide deformylase 1B, chloroplastic (PDF1B) (Solanum lycopersicum (Tomato)).